A 91-amino-acid chain; its full sequence is uncharacterized protein (91 aa).

Residues 7–23 traverse the membrane as a helical segment; the sequence is IALVGVVVVLFGALRYQ.

Its subcellular location is the membrane. This is an uncharacterized protein from Haemophilus influenzae (strain ATCC 51907 / DSM 11121 / KW20 / Rd).